Consider the following 432-residue polypeptide: Polyamine export protein (432 aa).

One can recognise a CNNM transmembrane domain in the interval 1–201 (MIMELFHTIL…AEAGVLKTQE (201 aa)). The next 4 helical transmembrane spans lie at 2–22 (IMELFHTILAIVALILSSAVV), 61–81 (FITVVQILLNMVAILGGGIGE), 100–120 (WIAPTASTIAFILVTCLFILF), and 138–158 (LSVVGIMNFSMYVFKPLVWFF). 2 consecutive CBS domains span residues 220–279 (MTTR…NENV) and 286–345 (LLRK…SNEE).

It belongs to the UPF0053 family. PaeA subfamily.

It is found in the cell inner membrane. In terms of biological role, involved in cadaverine and putrescine tolerance in stationary phase. May facilitate the efflux of both cadaverine and putrescine from the cytoplasm, reducing potentially toxic levels under certain stress conditions. The chain is Polyamine export protein from Haemophilus influenzae (strain ATCC 51907 / DSM 11121 / KW20 / Rd).